The following is a 217-amino-acid chain: Thymidylate kinase (217 aa).

14 to 21 (GNEGSGKT) contacts ATP.

It belongs to the thymidylate kinase family.

The catalysed reaction is dTMP + ATP = dTDP + ADP. Functionally, phosphorylation of dTMP to form dTDP in both de novo and salvage pathways of dTTP synthesis. This chain is Thymidylate kinase, found in Orientia tsutsugamushi (strain Ikeda) (Rickettsia tsutsugamushi).